The following is a 269-amino-acid chain: Formamidopyrimidine-DNA glycosylase (269 aa).

The active-site Schiff-base intermediate with DNA is the proline 2. Glutamate 3 acts as the Proton donor in catalysis. The active-site Proton donor; for beta-elimination activity is lysine 57. DNA contacts are provided by histidine 90, arginine 109, and lysine 150. The FPG-type zinc finger occupies 235-269; the sequence is QVYGRKGEPCRVCGTPIVATKHAQRATFYCRHCQK. Arginine 259 acts as the Proton donor; for delta-elimination activity in catalysis.

This sequence belongs to the FPG family. In terms of assembly, monomer. Zn(2+) is required as a cofactor.

The enzyme catalyses Hydrolysis of DNA containing ring-opened 7-methylguanine residues, releasing 2,6-diamino-4-hydroxy-5-(N-methyl)formamidopyrimidine.. The catalysed reaction is 2'-deoxyribonucleotide-(2'-deoxyribose 5'-phosphate)-2'-deoxyribonucleotide-DNA = a 3'-end 2'-deoxyribonucleotide-(2,3-dehydro-2,3-deoxyribose 5'-phosphate)-DNA + a 5'-end 5'-phospho-2'-deoxyribonucleoside-DNA + H(+). Functionally, involved in base excision repair of DNA damaged by oxidation or by mutagenic agents. Acts as a DNA glycosylase that recognizes and removes damaged bases. Has a preference for oxidized purines, such as 7,8-dihydro-8-oxoguanine (8-oxoG). Has AP (apurinic/apyrimidinic) lyase activity and introduces nicks in the DNA strand. Cleaves the DNA backbone by beta-delta elimination to generate a single-strand break at the site of the removed base with both 3'- and 5'-phosphates. In Salmonella paratyphi C (strain RKS4594), this protein is Formamidopyrimidine-DNA glycosylase.